A 217-amino-acid chain; its full sequence is NADH-quinone oxidoreductase subunit I (217 aa).

The tract at residues T22 to H41 is disordered. 2 consecutive 4Fe-4S ferredoxin-type domains span residues L43 to A73 and R89 to D118. [4Fe-4S] cluster is bound by residues C53, C56, C59, C63, C98, C101, C104, and C108. Residues A193–R217 are disordered.

The protein belongs to the complex I 23 kDa subunit family. As to quaternary structure, NDH-1 is composed of 14 different subunits. Subunits NuoA, H, J, K, L, M, N constitute the membrane sector of the complex. Requires [4Fe-4S] cluster as cofactor.

It localises to the cell membrane. It catalyses the reaction a quinone + NADH + 5 H(+)(in) = a quinol + NAD(+) + 4 H(+)(out). NDH-1 shuttles electrons from NADH, via FMN and iron-sulfur (Fe-S) centers, to quinones in the respiratory chain. The immediate electron acceptor for the enzyme in this species is believed to be ubiquinone. Couples the redox reaction to proton translocation (for every two electrons transferred, four hydrogen ions are translocated across the cytoplasmic membrane), and thus conserves the redox energy in a proton gradient. This Frankia casuarinae (strain DSM 45818 / CECT 9043 / HFP020203 / CcI3) protein is NADH-quinone oxidoreductase subunit I.